The sequence spans 148 residues: Large-conductance mechanosensitive channel (148 aa).

2 helical membrane passes run Val14–Leu34 and Gly85–Val105.

It belongs to the MscL family. In terms of assembly, homopentamer.

It is found in the cell inner membrane. Its function is as follows. Channel that opens in response to stretch forces in the membrane lipid bilayer. May participate in the regulation of osmotic pressure changes within the cell. The chain is Large-conductance mechanosensitive channel from Chlorobium phaeobacteroides (strain DSM 266 / SMG 266 / 2430).